Here is a 57-residue protein sequence, read N- to C-terminus: Small ribosomal subunit protein eS27 (57 aa).

Zn(2+)-binding residues include Cys-10, Cys-13, Cys-29, and Cys-32. Residues 10-32 (CPDCENEQTVFGKASTEVACAVC) form a C4-type zinc finger.

The protein belongs to the eukaryotic ribosomal protein eS27 family. As to quaternary structure, part of the 30S ribosomal subunit. The cofactor is Zn(2+).

This is Small ribosomal subunit protein eS27 from Halobacterium salinarum (strain ATCC 29341 / DSM 671 / R1).